A 221-amino-acid chain; its full sequence is Probable transaldolase (221 aa).

Residue lysine 83 is the Schiff-base intermediate with substrate of the active site.

The protein belongs to the transaldolase family. Type 3B subfamily.

The protein resides in the cytoplasm. It carries out the reaction D-sedoheptulose 7-phosphate + D-glyceraldehyde 3-phosphate = D-erythrose 4-phosphate + beta-D-fructose 6-phosphate. It participates in carbohydrate degradation; pentose phosphate pathway; D-glyceraldehyde 3-phosphate and beta-D-fructose 6-phosphate from D-ribose 5-phosphate and D-xylulose 5-phosphate (non-oxidative stage): step 2/3. In terms of biological role, transaldolase is important for the balance of metabolites in the pentose-phosphate pathway. This chain is Probable transaldolase, found in Petrotoga mobilis (strain DSM 10674 / SJ95).